A 179-amino-acid polypeptide reads, in one-letter code: Large ribosomal subunit protein uL5 (179 aa).

The protein belongs to the universal ribosomal protein uL5 family. In terms of assembly, part of the 50S ribosomal subunit; part of the 5S rRNA/L5/L18/L25 subcomplex. Contacts the 5S rRNA and the P site tRNA. Forms a bridge to the 30S subunit in the 70S ribosome.

Functionally, this is one of the proteins that bind and probably mediate the attachment of the 5S RNA into the large ribosomal subunit, where it forms part of the central protuberance. In the 70S ribosome it contacts protein S13 of the 30S subunit (bridge B1b), connecting the 2 subunits; this bridge is implicated in subunit movement. Contacts the P site tRNA; the 5S rRNA and some of its associated proteins might help stabilize positioning of ribosome-bound tRNAs. This Burkholderia cenocepacia (strain HI2424) protein is Large ribosomal subunit protein uL5.